A 297-amino-acid polypeptide reads, in one-letter code: N-acetylmuramic acid 6-phosphate etherase (297 aa).

Residues 56–219 (AIEAFNKGGR…STISMIGIGK (164 aa)) enclose the SIS domain. The active-site Proton donor is the Glu-84. The active site involves Glu-115.

This sequence belongs to the GCKR-like family. MurNAc-6-P etherase subfamily. Homodimer.

The enzyme catalyses N-acetyl-D-muramate 6-phosphate + H2O = N-acetyl-D-glucosamine 6-phosphate + (R)-lactate. The protein operates within amino-sugar metabolism; N-acetylmuramate degradation. Its function is as follows. Specifically catalyzes the cleavage of the D-lactyl ether substituent of MurNAc 6-phosphate, producing GlcNAc 6-phosphate and D-lactate. This is N-acetylmuramic acid 6-phosphate etherase from Lactococcus lactis subsp. lactis (strain IL1403) (Streptococcus lactis).